Reading from the N-terminus, the 799-residue chain is Probable inorganic carbon transporter subunit DabA (799 aa).

Zn(2+) contacts are provided by Cys-303, Asp-305, His-479, and Cys-494. The tract at residues 574 to 598 (AGAAAERSEALNGADPDKGVSETAS) is disordered.

It belongs to the inorganic carbon transporter (TC 9.A.2) DabA family. Forms a complex with DabB. Requires Zn(2+) as cofactor.

It is found in the cell membrane. In terms of biological role, part of an energy-coupled inorganic carbon pump. In Natronomonas pharaonis (strain ATCC 35678 / DSM 2160 / CIP 103997 / JCM 8858 / NBRC 14720 / NCIMB 2260 / Gabara) (Halobacterium pharaonis), this protein is Probable inorganic carbon transporter subunit DabA.